The primary structure comprises 417 residues: Serine hydroxymethyltransferase (417 aa).

Residues L121 and 125 to 127 (GHL) each bind (6S)-5,6,7,8-tetrahydrofolate. Residue K229 is modified to N6-(pyridoxal phosphate)lysine. (6S)-5,6,7,8-tetrahydrofolate is bound at residue 355–357 (SPF).

It belongs to the SHMT family. In terms of assembly, homodimer. Pyridoxal 5'-phosphate is required as a cofactor.

It localises to the cytoplasm. It carries out the reaction (6R)-5,10-methylene-5,6,7,8-tetrahydrofolate + glycine + H2O = (6S)-5,6,7,8-tetrahydrofolate + L-serine. Its pathway is one-carbon metabolism; tetrahydrofolate interconversion. It participates in amino-acid biosynthesis; glycine biosynthesis; glycine from L-serine: step 1/1. Functionally, catalyzes the reversible interconversion of serine and glycine with tetrahydrofolate (THF) serving as the one-carbon carrier. This reaction serves as the major source of one-carbon groups required for the biosynthesis of purines, thymidylate, methionine, and other important biomolecules. Also exhibits THF-independent aldolase activity toward beta-hydroxyamino acids, producing glycine and aldehydes, via a retro-aldol mechanism. The polypeptide is Serine hydroxymethyltransferase (Shewanella sp. (strain ANA-3)).